The chain runs to 124 residues: Holo-[acyl-carrier-protein] synthase (124 aa).

Mg(2+) contacts are provided by aspartate 5 and glutamate 56.

This sequence belongs to the P-Pant transferase superfamily. AcpS family. It depends on Mg(2+) as a cofactor.

The protein resides in the cytoplasm. The catalysed reaction is apo-[ACP] + CoA = holo-[ACP] + adenosine 3',5'-bisphosphate + H(+). Functionally, transfers the 4'-phosphopantetheine moiety from coenzyme A to a Ser of acyl-carrier-protein. This is Holo-[acyl-carrier-protein] synthase from Campylobacter hominis (strain ATCC BAA-381 / DSM 21671 / CCUG 45161 / LMG 19568 / NCTC 13146 / CH001A).